Reading from the N-terminus, the 327-residue chain is Phenylalanine--tRNA ligase alpha subunit (327 aa).

Glu-252 provides a ligand contact to Mg(2+).

The protein belongs to the class-II aminoacyl-tRNA synthetase family. Phe-tRNA synthetase alpha subunit type 1 subfamily. In terms of assembly, tetramer of two alpha and two beta subunits. Mg(2+) serves as cofactor.

It localises to the cytoplasm. It catalyses the reaction tRNA(Phe) + L-phenylalanine + ATP = L-phenylalanyl-tRNA(Phe) + AMP + diphosphate + H(+). The sequence is that of Phenylalanine--tRNA ligase alpha subunit from Erwinia tasmaniensis (strain DSM 17950 / CFBP 7177 / CIP 109463 / NCPPB 4357 / Et1/99).